The sequence spans 388 residues: N-acetylneuraminate epimerase (388 aa).

Residues 1–26 (MFSLIRAKRLAIGIAALAWSTGAVMA) form the signal peptide. 7 Kelch repeats span residues 48-92 (MAYV…AAAG), 94-147 (KIFA…VGLA), 149-186 (GRIA…KLVD), 187-232 (SYMG…ATMG), 236-285 (FLLV…VAGA), 307-356 (ANAA…DAPG), and 358-387 (LLVV…LSVE). Glutamate 242 functions as the Proton acceptor in the catalytic mechanism.

This sequence belongs to the NanM family. In terms of assembly, homodimer.

It localises to the periplasm. The catalysed reaction is N-acetyl-alpha-neuraminate = N-acetyl-beta-neuraminate. In terms of biological role, converts alpha-N-acetylneuranimic acid (Neu5Ac) to the beta-anomer, accelerating the equilibrium between the alpha- and beta-anomers. Probably facilitates sialidase-negative bacteria to compete successfully for limited amounts of extracellular Neu5Ac, which is likely taken up in the beta-anomer. In addition, the rapid removal of sialic acid from solution might be advantageous to the bacterium to damp down host responses. The polypeptide is N-acetylneuraminate epimerase (Brucella melitensis biotype 1 (strain ATCC 23456 / CCUG 17765 / NCTC 10094 / 16M)).